We begin with the raw amino-acid sequence, 89 residues long: Phosphocarrier protein HPr (89 aa).

The region spanning 1–88 (MLEHELIVTN…ELFENRFNED (88 aa)) is the HPr domain. Catalysis depends on His-15, which acts as the Pros-phosphohistidine intermediate. Ser-46 is subject to Phosphoserine; by HPrK/P.

Belongs to the HPr family.

Its subcellular location is the cytoplasm. With respect to regulation, phosphorylation on Ser-46 inhibits the phosphoryl transfer from enzyme I to HPr. General (non sugar-specific) component of the phosphoenolpyruvate-dependent sugar phosphotransferase system (sugar PTS). This major carbohydrate active-transport system catalyzes the phosphorylation of incoming sugar substrates concomitantly with their translocation across the cell membrane. The phosphoryl group from phosphoenolpyruvate (PEP) is transferred to the phosphoryl carrier protein HPr by enzyme I. Phospho-HPr then transfers it to the PTS EIIA domain. The sequence is that of Phosphocarrier protein HPr (ptsH) from Xylella fastidiosa (strain 9a5c).